A 249-amino-acid chain; its full sequence is DNA polymerase sliding clamp 1 (249 aa).

The protein belongs to the PCNA family. Forms heterodimers with PCNA2, which then recruit PCNA3; does not form homotrimers. The heterodimers interact with RfcS homotetramers. Heterotrimer which circularizes head-to-tail (head is at N-terminus, tail is at C-terminus) to form a toroid; DNA passes through its center. Replication factor C (RFC) is required to load the toroid on the DNA. Heterotrimer interacts, probably via this subunit, with flap endonuclease 1 (fen), Hjc, Dpo4, and XPF.

Its function is as follows. One of the sliding clamp subunits that acts as a moving platform for DNA processing. Responsible for tethering the catalytic subunit of DNA polymerase to DNA during high-speed replication. Heterotrimer stimulates the Holliday junction resolvase Hjc. DNA polymerase I, DNA ligase and the flap endonuclease may be constitutively associated with the PCNA heterotrimer forming a scanning complex able to couple DNA synthesis and Okazaki fragment maturation. The chain is DNA polymerase sliding clamp 1 from Saccharolobus solfataricus (strain ATCC 35092 / DSM 1617 / JCM 11322 / P2) (Sulfolobus solfataricus).